The sequence spans 481 residues: Cysteine--tRNA ligase (481 aa).

Residue Cys27 participates in Zn(2+) binding. The 'HIGH' region motif lies at 29–39 (PTVYNYAHIGN). Zn(2+) contacts are provided by Cys222, His247, and Glu251. The 'KMSKS' region motif lies at 279–283 (KMSKS). Lys282 contacts ATP.

Belongs to the class-I aminoacyl-tRNA synthetase family. As to quaternary structure, monomer. Zn(2+) is required as a cofactor.

The protein resides in the cytoplasm. It catalyses the reaction tRNA(Cys) + L-cysteine + ATP = L-cysteinyl-tRNA(Cys) + AMP + diphosphate. The chain is Cysteine--tRNA ligase from Borrelia turicatae (strain 91E135).